Consider the following 408-residue polypeptide: UPF0761 membrane protein Avin_36810 (408 aa).

Transmembrane regions (helical) follow at residues 33 to 53 (YTAL…LSVV), 92 to 112 (HLTW…LMTV), 132 to 152 (FLLH…GFAL), 174 to 194 (LLKV…YVAV), 209 to 229 (LFAA…VALF), and 238 to 258 (AFAA…IVLL).

Belongs to the UPF0761 family.

The protein localises to the cell inner membrane. This chain is UPF0761 membrane protein Avin_36810, found in Azotobacter vinelandii (strain DJ / ATCC BAA-1303).